Reading from the N-terminus, the 348-residue chain is Holliday junction branch migration complex subunit RuvB (348 aa).

A disordered region spans residues 1–20 (MKPPARMVSPERRSDDVGDT). Residues 1–183 (MKPPARMVSP…FGIPIRLNFY (183 aa)) are large ATPase domain (RuvB-L). ATP is bound by residues leucine 22, arginine 23, glycine 64, lysine 67, threonine 68, threonine 69, 130-132 (EDF), arginine 173, tyrosine 183, and arginine 220. Threonine 68 provides a ligand contact to Mg(2+). Residues 184–254 (TVEELEGIVT…IADHALSALE (71 aa)) are small ATPAse domain (RuvB-S). The head domain (RuvB-H) stretch occupies residues 257–348 (AAGLDAMDRR…FGLFGSEDDA (92 aa)). Residues arginine 293, arginine 312, and arginine 317 each coordinate DNA.

It belongs to the RuvB family. As to quaternary structure, homohexamer. Forms an RuvA(8)-RuvB(12)-Holliday junction (HJ) complex. HJ DNA is sandwiched between 2 RuvA tetramers; dsDNA enters through RuvA and exits via RuvB. An RuvB hexamer assembles on each DNA strand where it exits the tetramer. Each RuvB hexamer is contacted by two RuvA subunits (via domain III) on 2 adjacent RuvB subunits; this complex drives branch migration. In the full resolvosome a probable DNA-RuvA(4)-RuvB(12)-RuvC(2) complex forms which resolves the HJ.

The protein resides in the cytoplasm. The catalysed reaction is ATP + H2O = ADP + phosphate + H(+). The RuvA-RuvB-RuvC complex processes Holliday junction (HJ) DNA during genetic recombination and DNA repair, while the RuvA-RuvB complex plays an important role in the rescue of blocked DNA replication forks via replication fork reversal (RFR). RuvA specifically binds to HJ cruciform DNA, conferring on it an open structure. The RuvB hexamer acts as an ATP-dependent pump, pulling dsDNA into and through the RuvAB complex. RuvB forms 2 homohexamers on either side of HJ DNA bound by 1 or 2 RuvA tetramers; 4 subunits per hexamer contact DNA at a time. Coordinated motions by a converter formed by DNA-disengaged RuvB subunits stimulates ATP hydrolysis and nucleotide exchange. Immobilization of the converter enables RuvB to convert the ATP-contained energy into a lever motion, pulling 2 nucleotides of DNA out of the RuvA tetramer per ATP hydrolyzed, thus driving DNA branch migration. The RuvB motors rotate together with the DNA substrate, which together with the progressing nucleotide cycle form the mechanistic basis for DNA recombination by continuous HJ branch migration. Branch migration allows RuvC to scan DNA until it finds its consensus sequence, where it cleaves and resolves cruciform DNA. This is Holliday junction branch migration complex subunit RuvB from Bradyrhizobium sp. (strain BTAi1 / ATCC BAA-1182).